Reading from the N-terminus, the 209-residue chain is Small ribosomal subunit protein uS4 (209 aa).

Zn(2+)-binding residues include Cys9, Cys12, Cys26, and Cys31. The segment at 9–31 adopts a C4-type zinc-finger fold; sequence CRLCRREGVKLYLKGERCYSPKC. The S4 RNA-binding domain maps to 100 to 162; the sequence is RLDNVVYRLG…RNLELIRQNL (63 aa).

It belongs to the universal ribosomal protein uS4 family. In terms of assembly, part of the 30S ribosomal subunit. Contacts protein S5. The interaction surface between S4 and S5 is involved in control of translational fidelity. The cofactor is Zn(2+).

In terms of biological role, one of the primary rRNA binding proteins, it binds directly to 16S rRNA where it helps nucleate assembly of the body and platform of the 30S subunit. This Thermus thermophilus (strain ATCC BAA-163 / DSM 7039 / HB27) protein is Small ribosomal subunit protein uS4 (rpsD).